Consider the following 139-residue polypeptide: Putative pre-16S rRNA nuclease (139 aa).

The protein belongs to the YqgF nuclease family.

Its subcellular location is the cytoplasm. Its function is as follows. Could be a nuclease involved in processing of the 5'-end of pre-16S rRNA. The sequence is that of Putative pre-16S rRNA nuclease from Legionella pneumophila subsp. pneumophila (strain Philadelphia 1 / ATCC 33152 / DSM 7513).